The sequence spans 121 residues: Protein SNORC (121 aa).

The signal sequence occupies residues 1–24; that stretch reads MASCLALRVALLLISGVLAPAVLT. Over 25-92 the chain is Extracellular; sequence AEGPQEPDPT…QDGGSLGPGA (68 aa). The tract at residues 26–84 is disordered; sequence EGPQEPDPTLWNEPIELPSGEGPLESTSHNQEFAVSGPPFPTSAPAPEDSTPPARVDQD. Residues 93 to 113 form a helical membrane-spanning segment; the sequence is IAAIVIAALLATCVVLALVVV. Residues 114–121 are Cytoplasmic-facing; it reads ALRKFSAS.

In terms of assembly, interacts (via the extracellular domain) with FGF2. Expressed only in cartilage, including nasal, knee epiphyseal and rib tissues. In proliferation and hypertrophic chondrocytes, detected intracellulary and in the pericellular extracellular matrix. In primary spongiosa, detected only in the extracellular matrix.

Its subcellular location is the membrane. It is found in the cytoplasm. The protein resides in the secreted. The protein localises to the extracellular space. It localises to the extracellular matrix. Functionally, plays a role in the regulation of chondrocyte maturation and postnatal endochondral ossification. May inhibit cell growth stimulation induced by FGF2. The polypeptide is Protein SNORC (Mus musculus (Mouse)).